A 283-amino-acid chain; its full sequence is Pantothenate synthetase (283 aa).

Met30–His37 provides a ligand contact to ATP. The Proton donor role is filled by His37. Residue Gln61 coordinates (R)-pantoate. Position 61 (Gln61) interacts with beta-alanine. Gly147 to Asp150 provides a ligand contact to ATP. Gln153 is a binding site for (R)-pantoate. Residues Val176 and Leu184–Arg187 each bind ATP.

This sequence belongs to the pantothenate synthetase family. As to quaternary structure, homodimer.

The protein resides in the cytoplasm. It catalyses the reaction (R)-pantoate + beta-alanine + ATP = (R)-pantothenate + AMP + diphosphate + H(+). It participates in cofactor biosynthesis; (R)-pantothenate biosynthesis; (R)-pantothenate from (R)-pantoate and beta-alanine: step 1/1. Functionally, catalyzes the condensation of pantoate with beta-alanine in an ATP-dependent reaction via a pantoyl-adenylate intermediate. In Endomicrobium trichonymphae, this protein is Pantothenate synthetase.